The primary structure comprises 494 residues: MWNRRQGRLRTLAFGVEELRRRRREREAALRKARREQQLVSKRLLREDAPEEVGGQSAAVLLGEAEVQQFLRLAQRGTDEKEREKALVSLRRGLQHPDTQQTFIRLEGSMRTLVGILTSNRALLQLEAARCLHELSHSEQSAVAEACLPATSYLLTYLSGHSSDFIELCLYTLGNLIVESEAVRKQLLPQGIVPAFAACIQSPHVAVLEALGYALSQLLQAKEAPEKIIPSILDSSLPQQMLWLMQPGPKLNLGVAMEFAWCLHYIICSQVNNAVLLTHGALPTLALLLLDLAGTVQRMDDVGLELLACPVLRCLSNLLTEVPAEVMGQQMELRDERLVAALFIFLQFFLQKQPALLPEGLWLLNNLTANSPTFCTSLLSLDLIEPLLQLLPLSNAVCMLVLTVLCNVVEKGPAYCQRLWPGPLLSCVLNTLALSDTEVVGQSLELLQLLFLHQPEAARAFLQQSGLQALEKLQEETQLQERIHALQQIAATHG.

A coiled-coil region spans residues 15-39 (GVEELRRRRREREAALRKARREQQL). The next 2 helical transmembrane spans lie at 338 to 358 (LVAA…ALLP) and 386 to 406 (PLLQ…TVLC).

It localises to the membrane. The sequence is that of Transmembrane and coiled-coil domain-containing protein 6 (Tmco6) from Mus musculus (Mouse).